Consider the following 394-residue polypeptide: Phosphoglycerate kinase (394 aa).

Residues 21 to 23 (DFN), arginine 36, 59 to 62 (HLGR), arginine 118, and arginine 151 each bind substrate. Residues lysine 202, glycine 293, glutamate 324, and 350–353 (GGDS) each bind ATP.

Belongs to the phosphoglycerate kinase family. In terms of assembly, monomer.

It is found in the cytoplasm. It carries out the reaction (2R)-3-phosphoglycerate + ATP = (2R)-3-phospho-glyceroyl phosphate + ADP. The protein operates within carbohydrate degradation; glycolysis; pyruvate from D-glyceraldehyde 3-phosphate: step 2/5. The chain is Phosphoglycerate kinase from Exiguobacterium sp. (strain ATCC BAA-1283 / AT1b).